Here is a 61-residue protein sequence, read N- to C-terminus: Large ribosomal subunit protein eL24 (61 aa).

4 residues coordinate Zn(2+): cysteine 7, cysteine 10, cysteine 33, and cysteine 37. Residues cysteine 7–cysteine 37 form a C4-type zinc finger.

It belongs to the eukaryotic ribosomal protein eL24 family. In terms of assembly, part of the 50S ribosomal subunit. Forms a cluster with proteins L3 and L14. The cofactor is Zn(2+).

Binds to the 23S rRNA. The chain is Large ribosomal subunit protein eL24 from Sulfurisphaera tokodaii (strain DSM 16993 / JCM 10545 / NBRC 100140 / 7) (Sulfolobus tokodaii).